Reading from the N-terminus, the 452-residue chain is Protein CSN12 homolog (452 aa).

The region spanning 249–446 (VTFKYYEGVL…GFVVLSKSGA (198 aa)) is the PCI domain.

The protein belongs to the CSN12 family.

The sequence is that of Protein CSN12 homolog (csn-8) from Neurospora crassa (strain ATCC 24698 / 74-OR23-1A / CBS 708.71 / DSM 1257 / FGSC 987).